We begin with the raw amino-acid sequence, 504 residues long: Glucose-6-phosphate isomerase (504 aa).

Catalysis depends on E333, which acts as the Proton donor. Active-site residues include H364 and K473.

Belongs to the GPI family.

The protein localises to the cytoplasm. It catalyses the reaction alpha-D-glucose 6-phosphate = beta-D-fructose 6-phosphate. It participates in carbohydrate biosynthesis; gluconeogenesis. The protein operates within carbohydrate degradation; glycolysis; D-glyceraldehyde 3-phosphate and glycerone phosphate from D-glucose: step 2/4. Its function is as follows. Catalyzes the reversible isomerization of glucose-6-phosphate to fructose-6-phosphate. This Xanthomonas axonopodis pv. citri (strain 306) protein is Glucose-6-phosphate isomerase.